A 141-amino-acid chain; its full sequence is Flagellar assembly factor FliW (141 aa).

This sequence belongs to the FliW family. As to quaternary structure, interacts with translational regulator CsrA and flagellin(s).

It is found in the cytoplasm. Functionally, acts as an anti-CsrA protein, binds CsrA and prevents it from repressing translation of its target genes, one of which is flagellin. Binds to flagellin and participates in the assembly of the flagellum. The polypeptide is Flagellar assembly factor FliW (Clostridium acetobutylicum (strain ATCC 824 / DSM 792 / JCM 1419 / IAM 19013 / LMG 5710 / NBRC 13948 / NRRL B-527 / VKM B-1787 / 2291 / W)).